The sequence spans 178 residues: Disulfide bond formation protein B (178 aa).

Residues 1–16 (MTIFSSLNQFSKGHVS) are Cytoplasmic-facing. The chain crosses the membrane as a helical span at residues 17–33 (WLLLLLFIIFFEACALY). The Periplasmic segment spans residues 34-51 (FQHVMMLAPCVMCIYERV). Residues C43 and C46 are joined by a disulfide bond. The chain crosses the membrane as a helical span at residues 52-67 (AMMGIGGAAIIGLIAP). At 68-74 (NNALFRW) the chain is on the cytoplasmic side. Residues 75-92 (LGLIGWGLSSYKGLMLAM) traverse the membrane as a helical segment. At 93-147 (QHVDYQFNPSPFATCDLFVTFPSWAPLNQWVPWMFEAYGDCSKIVWQFFDLSMPQ) the chain is on the periplasmic side. A disulfide bond links C107 and C133. The chain crosses the membrane as a helical span at residues 148–166 (WLVVIFAGNLVALALIVIA). Over 167–178 (QFFPVKRKNPIR) the chain is Cytoplasmic.

This sequence belongs to the DsbB family.

The protein resides in the cell inner membrane. In terms of biological role, required for disulfide bond formation in some periplasmic proteins. Acts by oxidizing the DsbA protein. This Vibrio parahaemolyticus serotype O3:K6 (strain RIMD 2210633) protein is Disulfide bond formation protein B.